A 145-amino-acid polypeptide reads, in one-letter code: MVGRNSAIAAGVCGALFIGYCIYFDRKRRSDPNFKNRLRERRKKQKLAKERAGLSKLPDLKDAEAVQKFFLEEIQLGEELLAQGDYEKGVDHLTNAIAVCGQPQQLLQVLQQTLPPPVFQMLLTKLPTISQRIVSAQSLAEDDVE.

Residues 1-6 (MVGRNS) are Mitochondrial intermembrane-facing. A helical membrane pass occupies residues 7 to 24 (AIAAGVCGALFIGYCIYF). The Cytoplasmic segment spans residues 25–145 (DRKRRSDPNF…AQSLAEDDVE (121 aa)). Residues K35, K56, K61, and K68 each participate in a glycyl lysine isopeptide (Lys-Gly) (interchain with G-Cter in ubiquitin) cross-link. A phosphoserine mark is found at S135 and S138.

Belongs to the Tom20 family. Forms part of the preprotein translocase complex of the outer mitochondrial membrane (TOM complex) which consists of at least 7 different proteins (TOMM5, TOMM6, TOMM7, TOMM20, TOMM22, TOMM40 and TOMM70). Interacts with TOM22. Interacts with APEX1. Interacts with TBC1D21. Upon mitochondrial depolarization, interacts with PINK1; the interaction is required for PINK1-TOM-TIM23 supercomplex formation which is critical for PINK1 stabilization at the outer mitochondrial membrane, kinase activation and downstream mitophagy. In terms of processing, ubiquitinated by PRKN during mitophagy, leading to its degradation and enhancement of mitophagy. Deubiquitinated by USP30. As to expression, expressed in brain, kidney, stomach, colon, jejunum, ileum, testis, ovary and oviduct (at protein level). In the brain, expressed in neural cells of the cerebrum and cerebellum (at protein level). In the kidney, expressed in the proximal to distal tubule in the cortex and the outer and inner zones of the medulla (at protein level). In the stomach, expressed in the basal layer of stratified squamous epithelia in the forestomach and in the gastric pit and fundic gland of the glandular stomach (at protein level). Expressed in epithelial cells of the jejunum, ileum, and colon (at protein level). In the testis, expressed by spermatocytes and spermatogonia (at protein level). In the ovaries, expressed by follicular epithelial cells and corpus luteum cells (at protein level). In the oviduct, expressed in the epithelia of the isthmus and the ciliated cells of the ampulla (at protein level). Expressed in the sperm midpiece (at protein level).

It is found in the mitochondrion outer membrane. Its function is as follows. Central component of the receptor complex responsible for the recognition and translocation of cytosolically synthesized mitochondrial preproteins. Together with TOM22 functions as the transit peptide receptor at the surface of the mitochondrion outer membrane and facilitates the movement of preproteins into the TOM40 translocation pore. Required for the translocation across the mitochondrial outer membrane of cytochrome P450 monooxygenases. The protein is Mitochondrial import receptor subunit TOM20 homolog (Tomm20) of Mus musculus (Mouse).